A 149-amino-acid polypeptide reads, in one-letter code: Calmodulin-6 (149 aa).

4 consecutive EF-hand domains span residues aspartate 8–asparagine 43, proline 44–aspartate 79, aspartate 81–lysine 116, and leucine 117–lysine 149. Positions 21, 23, 25, 27, 32, 57, 59, 61, 63, 68, 94, 96, 98, 105, 130, 132, 134, 136, and 141 each coordinate Ca(2+).

The protein belongs to the calmodulin family. Interacts with KCBP.

Functionally, calmodulin mediates the control of a large number of enzymes, ion channels and other proteins by Ca(2+). Among the enzymes to be stimulated by the calmodulin-Ca(2+) complex are a number of protein kinases and phosphatases. The protein is Calmodulin-6 (CAM6) of Arabidopsis thaliana (Mouse-ear cress).